The following is a 225-amino-acid chain: Insulin-induced gene 2 protein (225 aa).

Residues Met-1–Leu-28 lie on the Cytoplasmic side of the membrane. A helical transmembrane segment spans residues Met-29–Ile-51. The Lumenal segment spans residues Gln-52 to Ala-70. A helical transmembrane segment spans residues Trp-71 to Tyr-88. Residues Pro-89–Arg-103 lie on the Cytoplasmic side of the membrane. The helical transmembrane segment at Glu-104 to Asp-126 threads the bilayer. The Lumenal portion of the chain corresponds to Phe-127–Asn-129. The helical transmembrane segment at Asn-130 to Phe-148 threads the bilayer. Residues Asp-149–Ser-153 are Cytoplasmic-facing. Phosphoserine is present on Ser-151. A helical transmembrane segment spans residues Gly-154 to Asn-175. At Gly-176–Arg-189 the chain is on the lumenal side. The helical transmembrane segment at Ser-190–Gly-207 threads the bilayer. The Cytoplasmic segment spans residues Arg-208–Glu-225. Position 215 is a cysteine sulfenic acid (-SOH); alternate (Cys-215). A Glycyl cysteine thioester (Cys-Gly) (interchain with G-Cter in ubiquitin); alternate cross-link involves residue Cys-215. The KxHxx motif lies at Ala-219–Glu-225.

The protein belongs to the INSIG family. In terms of assembly, interacts with SCAP; interaction is direct and only takes place in the presence of sterols; it prevents interaction between SCAP and the coat protein complex II (COPII). Associates with the SCAP-SREBP complex (composed of SCAP and SREBF1/SREBP1 or SREBF2/SREBP2); association is mediated via its interaction with SCAP and only takes place in the presence of sterols. Interacts with RNF139. Interacts with RNF145. Phosphorylation at Ser-151 by PCK1 reduces binding to oxysterol, disrupting the interaction between INSIG2 and SCAP, thereby promoting nuclear translocation of SREBP proteins (SREBF1/SREBP1 or SREBF2/SREBP2) and subsequent transcription of downstream lipogenesis-related genes. In terms of processing, polyubiquitinated by AMFR/gp78 at Cys-215 in some tissues such as adipose tissues, undifferentiated myoblasts and liver, leading to its degradation. In differentiated myotubes, Cys-215 oxidation prevents ubiquitination at the same site, resulting in protein stabilization. Post-translationally, oxidized at Cys-215 in differentiated myotubes, preventing ubiquitination at the same site, and resulting in protein stabilization.

The protein resides in the endoplasmic reticulum membrane. In terms of biological role, oxysterol-binding protein that mediates feedback control of cholesterol synthesis by controlling both endoplasmic reticulum to Golgi transport of SCAP and degradation of HMGCR. Acts as a negative regulator of cholesterol biosynthesis by mediating the retention of the SCAP-SREBP complex in the endoplasmic reticulum, thereby blocking the processing of sterol regulatory element-binding proteins (SREBPs) SREBF1/SREBP1 and SREBF2/SREBP2. Binds oxysterol, including 22-hydroxycholesterol, 24-hydroxycholesterol, 25-hydroxycholesterol and 27-hydroxycholesterol, regulating interaction with SCAP and retention of the SCAP-SREBP complex in the endoplasmic reticulum. In presence of oxysterol, interacts with SCAP, retaining the SCAP-SREBP complex in the endoplasmic reticulum, thereby preventing SCAP from escorting SREBF1/SREBP1 and SREBF2/SREBP2 to the Golgi. Sterol deprivation or phosphorylation by PCK1 reduce oxysterol-binding, disrupting the interaction between INSIG2 and SCAP, thereby promoting Golgi transport of the SCAP-SREBP complex, followed by processing and nuclear translocation of SREBF1/SREBP1 and SREBF2/SREBP2. Also regulates cholesterol synthesis by regulating degradation of HMGCR: initiates the sterol-mediated ubiquitin-mediated endoplasmic reticulum-associated degradation (ERAD) of HMGCR via recruitment of the reductase to the ubiquitin ligase RNF139. The polypeptide is Insulin-induced gene 2 protein (Papio anubis (Olive baboon)).